The sequence spans 451 residues: MDETDSQITCADSSVDKLSHLKRNEVKSCPLPELHGADEMLPELNKSCLTNPDILRYSRQLVLPDLGVQGQLKLSKASVLVIGCGGLGCPVAQYLAASGIGRLGLLDYDVVEMSNLHRQVLHGENRLGMSKSVSVAKTLRKLNSAVVYLPYHISLNPENALQIIQQYDIIADCSDNVPTRYLVNDTCVLAGKPLVSASALRWEGQLTVYNYHQGPCYRCLFPKPPPSETVTNCADGGVLGIVPGIIGSLQALEVLKIASGMAPSYSGVLLMFDALEGRFRNIKIRGKKNDCAACSNPSETAILQDYEAFCGSSASDKCRMLRLLSRDERLSVEEYKRLLDDHVPHILMDVRPQPEVDICRLPHSIHIPLKGLEEKNEKWVSFLRTKIAELITAGNRTEKTVITICKLGNDSQIAVKILQDLFGKEDLFIAKDVQGGLMAWAENIDPMFPRY.

Residues glycine 86, aspartate 107, 114-118, lysine 131, and 175-176 each bind ATP; these read SNLHR and DN. Zn(2+) contacts are provided by cysteine 216 and cysteine 219. Cysteine 233 (glycyl thioester intermediate; for adenylyltransferase activity) is an active-site residue. Residues cysteine 291 and cysteine 294 each coordinate Zn(2+). An intrachain disulfide couples cysteine 310 to cysteine 318. Positions 341–449 constitute a Rhodanese domain; it reads DHVPHILMDV…WAENIDPMFP (109 aa). The active-site Cysteine persulfide intermediate; for sulfurtransferase activity is cysteine 405.

It in the N-terminal section; belongs to the HesA/MoeB/ThiF family. UBA4 subfamily. The cofactor is Zn(2+).

It localises to the cytoplasm. It is found in the cytosol. It catalyses the reaction [molybdopterin-synthase sulfur-carrier protein]-C-terminal Gly-Gly + ATP + H(+) = [molybdopterin-synthase sulfur-carrier protein]-C-terminal Gly-Gly-AMP + diphosphate. The enzyme catalyses [molybdopterin-synthase sulfur-carrier protein]-C-terminal Gly-Gly-AMP + S-sulfanyl-L-cysteinyl-[cysteine desulfurase] + AH2 = [molybdopterin-synthase sulfur-carrier protein]-C-terminal-Gly-aminoethanethioate + L-cysteinyl-[cysteine desulfurase] + A + AMP + 2 H(+). It participates in tRNA modification; 5-methoxycarbonylmethyl-2-thiouridine-tRNA biosynthesis. It functions in the pathway cofactor biosynthesis; molybdopterin biosynthesis. Functionally, plays a central role in 2-thiolation of mcm(5)S(2)U at tRNA wobble positions of cytosolic tRNA(Lys), tRNA(Glu) and tRNA(Gln). Also essential during biosynthesis of the molybdenum cofactor. Acts by mediating the C-terminal thiocarboxylation of sulfur carriers urm1 and mocs2a. Its N-terminus first activates urm1 and mocs2a as acyl-adenylates (-COAMP), then the persulfide sulfur on the catalytic cysteine is transferred to urm1 and mocs2a to form thiocarboxylation (-COSH) of their C-terminus. The reaction probably involves hydrogen sulfide that is generated from the persulfide intermediate and that acts as a nucleophile towards urm1 and mocs2a. Subsequently, a transient disulfide bond is formed. Does not use thiosulfate as sulfur donor; nfs1 probably acting as a sulfur donor for thiocarboxylation reactions. The polypeptide is Adenylyltransferase and sulfurtransferase MOCS3 (mocs3) (Xenopus laevis (African clawed frog)).